Reading from the N-terminus, the 386-residue chain is 3-ketoacyl-CoA thiolase (386 aa).

Cys-91 serves as the catalytic Acyl-thioester intermediate. Active-site proton acceptor residues include His-342 and Cys-372.

The protein belongs to the thiolase-like superfamily. Thiolase family. Heterotetramer of two alpha chains (FadB) and two beta chains (FadA).

The protein localises to the cytoplasm. The catalysed reaction is an acyl-CoA + acetyl-CoA = a 3-oxoacyl-CoA + CoA. Its pathway is lipid metabolism; fatty acid beta-oxidation. Its function is as follows. Catalyzes the final step of fatty acid oxidation in which acetyl-CoA is released and the CoA ester of a fatty acid two carbons shorter is formed. The protein is 3-ketoacyl-CoA thiolase of Colwellia psychrerythraea (strain 34H / ATCC BAA-681) (Vibrio psychroerythus).